Consider the following 359-residue polypeptide: 4-galactosyl-N-acetylglucosaminide 3-alpha-L-fucosyltransferase FUT6 (359 aa).

The Cytoplasmic portion of the chain corresponds to 1–14 (MDPLGPAKPQWSCR). A helical; Signal-anchor for type II membrane protein membrane pass occupies residues 15-34 (CCLTTLLFQLLVAVCFFSYL). Residues 35–359 (RVSRDDPTVY…QTRSITAWFT (325 aa)) lie on the Lumenal side of the membrane. N-linked (GlcNAc...) asparagine glycans are attached at residues asparagine 46, asparagine 91, asparagine 153, and asparagine 184. The segment at 73-112 (KPTALPRCSEMLPGTADCNITADRKVYPQADAVIVHHREV) is determines site-specific fucosylation.

It belongs to the glycosyltransferase 10 family. In terms of assembly, homodimer and monomer. Monomer (secreted form). In terms of processing, N-glycosylated. Post-translationally, proteolytic cleavage releases a secreted glycoform of 43 kDa.

The protein resides in the golgi apparatus. It localises to the golgi stack membrane. The protein localises to the secreted. It carries out the reaction a beta-D-galactosyl-(1-&gt;4)-N-acetyl-beta-D-glucosaminyl derivative + GDP-beta-L-fucose = a beta-D-galactosyl-(1-&gt;4)-[alpha-L-fucosyl-(1-&gt;3)]-N-acetyl-beta-D-glucosaminyl derivative + GDP + H(+). The enzyme catalyses an N-acetyl-alpha-neuraminyl-(2-&gt;3)-beta-D-galactosyl-(1-&gt;4)-N-acetyl-beta-D-glucosaminyl derivative + GDP-beta-L-fucose = an alpha-Neu5Ac-(2-&gt;3)-beta-D-Gal-(1-&gt;4)-[alpha-L-Fuc-(1-&gt;3)]-beta-D-GlcNAc derivative + GDP + H(+). The catalysed reaction is an alpha-Neu5Ac-(2-&gt;3)-beta-D-Gal-(1-&gt;4)-beta-D-GlcNAc-(1-&gt;3)-beta-D-Gal-(1-&gt;4)-[alpha-L-Fuc-(1-&gt;3)]-beta-D-GlcNAc derivative + GDP-beta-L-fucose = an alpha-Neu5Ac-(2-&gt;3)-beta-D-Gal-(1-&gt;4)-[alpha-L-Fuc-(1-&gt;3)]-beta-D-GlcNAc-(1-&gt;3)-beta-D-Gal-(1-&gt;4)-[alpha-L-Fuc-(1-&gt;3)]-beta-D-GlcNAc derivative + GDP + H(+). It catalyses the reaction a neolactoside nLc6Cer + GDP-beta-L-fucose = beta-D-Gal-(1-&gt;4)-[alpha-L-Fuc-(1-&gt;3)]-beta-D-GlcNAc-(1-&gt;3)-beta-D-Gal-(1-&gt;4)-beta-D-GlcNAc-(1-&gt;3)-beta-D-Gal-(1-&gt;4)-beta-D-Glc-(1&lt;-&gt;1')-Cer + GDP + H(+). It carries out the reaction a neolactoside nLc6Cer + GDP-beta-L-fucose = beta-D-galactosyl-(1-&gt;4)-N-acetyl-beta-D-glucosaminyl-(1-&gt;3)-beta-D-galactosyl-(1-&gt;4)-[alpha-L-fucosyl-(1-&gt;3)]-N-acetyl-beta-D-glucosaminyl-(1-&gt;3)-beta-D-galactosyl-(1-&gt;4)-beta-D-glucosyl-(1&lt;-&gt;1')-ceramide + GDP + H(+). The enzyme catalyses a neolactoside VI(3)-alpha-NeuNAc-nLc6Cer + GDP-beta-L-fucose = a neolactoside VI(3)-alpha-NeuAc,V(3)-alphaFuc-nLc6Cer + GDP + H(+). The catalysed reaction is beta-D-galactosyl-(1-&gt;4)-N-acetyl-D-glucosamine + GDP-beta-L-fucose = beta-D-galactosyl-(1-&gt;4)-[alpha-L-fucosyl-(1-&gt;3)]-N-acetyl-D-glucosamine + GDP + H(+). It catalyses the reaction N-acetyl-alpha-neuraminosyl-(2-&gt;3)-beta-D-galactosyl-(1-&gt;4)-N-acetyl-beta-D-glucosamine + GDP-beta-L-fucose = N-acetyl-alpha-neuraminosyl-(2-&gt;3)-beta-D-galactosyl-(1-&gt;4)-[alpha-L-fucosyl-(1-&gt;3)]-N-acetyl-beta-D-glucosamine + GDP + H(+). It carries out the reaction lactose + GDP-beta-L-fucose = beta-D-galactosyl-(1-&gt;4)-[alpha-L-fucosyl-(1-&gt;3)]-D-glucose + GDP + H(+). The enzyme catalyses alpha-L-Fuc-(1-&gt;2)-beta-D-Gal-(1-&gt;4)-D-Glc + GDP-beta-L-fucose = alpha-L-Fuc-(1-&gt;2)-beta-D-Gal-(1-&gt;4)-[alpha-L-Fuc-(1-&gt;3)]-D-Glc + GDP + H(+). The catalysed reaction is a beta-D-galactosyl-(1-&gt;4)-N-acetyl-beta-D-6-sulfooxy-glucosaminyl derivative + GDP-beta-L-fucose = a beta-D-galactosyl-(1-&gt;4)-[alpha-L-fucosyl-(1-&gt;3)]-N-acetyl-beta-D-6-sulfooxy-glucosaminyl derivative + GDP + H(+). Its pathway is protein modification; protein glycosylation. Functionally, catalyzes the transfer of L-fucose, from a guanosine diphosphate-beta-L-fucose, to the N-acetyl glucosamine (GlcNAc) of a distal alpha2,3 sialylated lactosamine unit of a glycoprotein- or glycolipid-linked sialopolylactosamines chain or of a distal or internal lactosamine unit of a neutral glycoprotein- or glycolipid-linked polylactosamines chain through an alpha-1,3 glycosidic linkage and participates in surface expression of the sialyl Lewis X (sLe(x)), Lewis X (Le(x)) and non sialylated VIM2 determinants. Moreover transfers fucose to H-type 2 (Fucalpha1-2Galbeta1-4GlcNAc) chain acceptor substrates and participates in difucosylated sialyl Lewis x determinants. Also fucosylates a polylactosamine substrate having a 6 sulfate modification at the GlcNAc moiety and gives rise to sialyl and non-sialyl 6-sulfo lewis X. Does not have activity towards type 1 ((Galbeta1-3GlcNAc)) and H-type 1 chain (Fucalpha1-2Galbeta1-3GlcNAc) acceptors substrates. This chain is 4-galactosyl-N-acetylglucosaminide 3-alpha-L-fucosyltransferase FUT6, found in Gorilla gorilla gorilla (Western lowland gorilla).